Reading from the N-terminus, the 490-residue chain is Cytochrome P450 2C55 (490 aa).

Cysteine 435 contributes to the heme binding site.

The protein belongs to the cytochrome P450 family. The cofactor is heme. Highest level in colon. Low levels in liver and small intestine.

The protein resides in the endoplasmic reticulum membrane. Its subcellular location is the microsome membrane. The enzyme catalyses an organic molecule + reduced [NADPH--hemoprotein reductase] + O2 = an alcohol + oxidized [NADPH--hemoprotein reductase] + H2O + H(+). Functionally, metabolizes arachidonic acid mainly to 19-hydroxyeicosatetraenoic acid (HETE). In Mus musculus (Mouse), this protein is Cytochrome P450 2C55.